Consider the following 324-residue polypeptide: ATP-dependent 6-phosphofructokinase (324 aa).

Glycine 11 provides a ligand contact to ATP. An ADP-binding site is contributed by 21–25 (RAVVR). Residues 72 to 73 (RE) and 102 to 105 (GNGS) contribute to the ATP site. Position 103 (asparagine 103) interacts with Mg(2+). 126-128 (TID) is a substrate binding site. Aspartate 128 functions as the Proton acceptor in the catalytic mechanism. Arginine 155 is an ADP binding site. Substrate contacts are provided by residues arginine 163 and 170–172 (MGR). ADP contacts are provided by residues 186 to 188 (GAD), arginine 212, and 214 to 216 (KKF). Substrate contacts are provided by residues glutamate 223, arginine 248, and 254 to 257 (YIQR).

Belongs to the phosphofructokinase type A (PFKA) family. ATP-dependent PFK group I subfamily. Prokaryotic clade 'B1' sub-subfamily. As to quaternary structure, homotetramer. Mg(2+) is required as a cofactor.

The protein localises to the cytoplasm. The enzyme catalyses beta-D-fructose 6-phosphate + ATP = beta-D-fructose 1,6-bisphosphate + ADP + H(+). It functions in the pathway carbohydrate degradation; glycolysis; D-glyceraldehyde 3-phosphate and glycerone phosphate from D-glucose: step 3/4. Its activity is regulated as follows. Allosterically activated by ADP and other diphosphonucleosides, and allosterically inhibited by phosphoenolpyruvate. Functionally, catalyzes the phosphorylation of D-fructose 6-phosphate to fructose 1,6-bisphosphate by ATP, the first committing step of glycolysis. The sequence is that of ATP-dependent 6-phosphofructokinase from Persephonella marina (strain DSM 14350 / EX-H1).